A 95-amino-acid chain; its full sequence is Small ribosomal subunit protein bS6 (95 aa).

It belongs to the bacterial ribosomal protein bS6 family.

Its function is as follows. Binds together with bS18 to 16S ribosomal RNA. The protein is Small ribosomal subunit protein bS6 of Caldanaerobacter subterraneus subsp. tengcongensis (strain DSM 15242 / JCM 11007 / NBRC 100824 / MB4) (Thermoanaerobacter tengcongensis).